Reading from the N-terminus, the 49-residue chain is MRVNVTLACTECGERNYITTKNKRTNPERIEMKKHCARDNKHTMHRETK.

It belongs to the bacterial ribosomal protein bL33 family.

The protein is Large ribosomal subunit protein bL33A of Staphylococcus saprophyticus subsp. saprophyticus (strain ATCC 15305 / DSM 20229 / NCIMB 8711 / NCTC 7292 / S-41).